The chain runs to 377 residues: Chaperone protein DnaJ (377 aa).

Positions 5–70 constitute a J domain; that stretch reads DYYEVLGVGK…EKKAAYDQYG (66 aa). The segment at 137–215 adopts a CR-type zinc-finger fold; the sequence is GHEAQIRVPH…CHGQGKLKSQ (79 aa). Positions 150, 153, 167, 170, 189, 192, 203, and 206 each coordinate Zn(2+). 4 CXXCXGXG motif repeats span residues 150-157, 167-174, 189-196, and 203-210; these read CDHCHGNG, CPTCHGAG, CPKCHGSG, and CTKCHGQG.

It belongs to the DnaJ family. Homodimer. It depends on Zn(2+) as a cofactor.

The protein localises to the cytoplasm. Participates actively in the response to hyperosmotic and heat shock by preventing the aggregation of stress-denatured proteins and by disaggregating proteins, also in an autonomous, DnaK-independent fashion. Unfolded proteins bind initially to DnaJ; upon interaction with the DnaJ-bound protein, DnaK hydrolyzes its bound ATP, resulting in the formation of a stable complex. GrpE releases ADP from DnaK; ATP binding to DnaK triggers the release of the substrate protein, thus completing the reaction cycle. Several rounds of ATP-dependent interactions between DnaJ, DnaK and GrpE are required for fully efficient folding. Also involved, together with DnaK and GrpE, in the DNA replication of plasmids through activation of initiation proteins. The sequence is that of Chaperone protein DnaJ from Cupriavidus taiwanensis (strain DSM 17343 / BCRC 17206 / CCUG 44338 / CIP 107171 / LMG 19424 / R1) (Ralstonia taiwanensis (strain LMG 19424)).